The following is a 419-amino-acid chain: G protein-activated inward rectifier potassium channel 4 (419 aa).

Residues 1–24 (MAGDSRNAMNQDMEIGVTPRDPKK) are disordered. Residues 1–86 (MAGDSRNAMN…LFTTLVDLKW (86 aa)) are Cytoplasmic-facing. Serine 5 carries the phosphoserine modification. The helical transmembrane segment at 87 to 111 (RFNLLVFTMVYTITWLFFGFIWWLI) threads the bilayer. The Extracellular segment spans residues 112–135 (AYIRGDLDHVGDREWIPCVENLSG). The segment at residues 136-147 (FVSAFLFSIETE) is an intramembrane region (helical; Pore-forming). The pore-forming intramembrane region spans 148 to 154 (TTIGYGF). The Selectivity filter signature appears at 149–154 (TIGYGF). The Extracellular portion of the chain corresponds to 155–163 (RVITEKCPE). Residues 164–185 (GIVLLLVQAILGSIVNAFMVGC) traverse the membrane as a helical segment. Residues 186–419 (MFVKISQPKK…SGSQETKDSA (234 aa)) lie on the Cytoplasmic side of the membrane. The interval 381–419 (PSPPLPGGCVGAELGAEAEQEGEEEPEGLSGSQETKDSA) is disordered. A compositionally biased stretch (acidic residues) spans 396-407 (AEAEQEGEEEPE).

Belongs to the inward rectifier-type potassium channel (TC 1.A.2.1) family. KCNJ5 subfamily. In terms of assembly, associates with KCNJ3/GIRK1 or KCNJ6/GIRK2 to form a G-protein-activated heteromultimer pore-forming unit. The resulting inward current is much larger.

The protein localises to the membrane. The enzyme catalyses K(+)(in) = K(+)(out). With respect to regulation, heteromultimer composed of KCNJ3/GIRK1 and KCNJ5/GIRK4 is activated by phosphatidylinositol 4,5 biphosphate (PtdIns(4,5)P2). Its function is as follows. Inward rectifier potassium channels are characterized by a greater tendency to allow potassium to flow into the cell rather than out of it. Their voltage dependence is regulated by the concentration of extracellular potassium; as external potassium is raised, the voltage range of the channel opening shifts to more positive voltages. The inward rectification is mainly due to the blockage of outward current by internal magnesium. This receptor plays a crucial role in regulating the heartbeat. Can be blocked by external barium. This potassium channel is controlled by G proteins. This is G protein-activated inward rectifier potassium channel 4 (KCNJ5) from Bos taurus (Bovine).